The chain runs to 425 residues: Kynureninase (425 aa).

Residues leucine 105, threonine 106, phenylalanine 133–aspartate 136, aspartate 218, histidine 221, and tyrosine 243 contribute to the pyridoxal 5'-phosphate site. An N6-(pyridoxal phosphate)lysine modification is found at lysine 244. Pyridoxal 5'-phosphate-binding residues include tryptophan 274 and asparagine 302.

It belongs to the kynureninase family. In terms of assembly, homodimer. Pyridoxal 5'-phosphate serves as cofactor.

It catalyses the reaction L-kynurenine + H2O = anthranilate + L-alanine + H(+). It carries out the reaction 3-hydroxy-L-kynurenine + H2O = 3-hydroxyanthranilate + L-alanine + H(+). It functions in the pathway amino-acid degradation; L-kynurenine degradation; L-alanine and anthranilate from L-kynurenine: step 1/1. It participates in cofactor biosynthesis; NAD(+) biosynthesis; quinolinate from L-kynurenine: step 2/3. Catalyzes the cleavage of L-kynurenine (L-Kyn) and L-3-hydroxykynurenine (L-3OHKyn) into anthranilic acid (AA) and 3-hydroxyanthranilic acid (3-OHAA), respectively. This chain is Kynureninase, found in Christiangramia forsetii (strain DSM 17595 / CGMCC 1.15422 / KT0803) (Gramella forsetii).